Reading from the N-terminus, the 245-residue chain is Transcriptional regulatory protein YpdB (245 aa).

Residues 2–116 (KVIIVEDEFL…RITGMLQKLE (115 aa)) enclose the Response regulatory domain. Asp-53 is subject to 4-aspartylphosphate. One can recognise an HTH LytTR-type domain in the interval 140-245 (INLVKDERII…VKEFRQLMHL (106 aa)).

Phosphorylated by YpdA.

The protein localises to the cytoplasm. In terms of biological role, member of the two-component regulatory system YpdA/YpdB. YpdB regulates expression of yhjX by binding to its promoter region. The polypeptide is Transcriptional regulatory protein YpdB (ypdB) (Escherichia coli O6:H1 (strain CFT073 / ATCC 700928 / UPEC)).